The chain runs to 152 residues: Protein-export protein SecB (152 aa).

Belongs to the SecB family. In terms of assembly, homotetramer, a dimer of dimers. One homotetramer interacts with 1 SecA dimer.

It localises to the cytoplasm. One of the proteins required for the normal export of preproteins out of the cell cytoplasm. It is a molecular chaperone that binds to a subset of precursor proteins, maintaining them in a translocation-competent state. It also specifically binds to its receptor SecA. This Rickettsia typhi (strain ATCC VR-144 / Wilmington) protein is Protein-export protein SecB.